Reading from the N-terminus, the 100-residue chain is Large ribosomal subunit protein uL23 (100 aa).

This sequence belongs to the universal ribosomal protein uL23 family. Part of the 50S ribosomal subunit. Contacts protein L29, and trigger factor when it is bound to the ribosome.

In terms of biological role, one of the early assembly proteins it binds 23S rRNA. One of the proteins that surrounds the polypeptide exit tunnel on the outside of the ribosome. Forms the main docking site for trigger factor binding to the ribosome. This chain is Large ribosomal subunit protein uL23, found in Yersinia pestis bv. Antiqua (strain Antiqua).